We begin with the raw amino-acid sequence, 177 residues long: Bifunctional protein PyrR (177 aa).

The PRPP-binding motif lies at 99-111 (VVLVDDVLFTGRT).

The protein belongs to the purine/pyrimidine phosphoribosyltransferase family. PyrR subfamily.

It catalyses the reaction UMP + diphosphate = 5-phospho-alpha-D-ribose 1-diphosphate + uracil. Regulates the transcription of the pyrimidine nucleotide (pyr) operon in response to exogenous pyrimidines. In terms of biological role, also displays a weak uracil phosphoribosyltransferase activity which is not physiologically significant. The protein is Bifunctional protein PyrR of Geobacter sulfurreducens (strain ATCC 51573 / DSM 12127 / PCA).